The primary structure comprises 156 residues: Small ribosomal subunit protein uS7 (156 aa).

The protein belongs to the universal ribosomal protein uS7 family. As to quaternary structure, part of the 30S ribosomal subunit. Contacts proteins S9 and S11.

Functionally, one of the primary rRNA binding proteins, it binds directly to 16S rRNA where it nucleates assembly of the head domain of the 30S subunit. Is located at the subunit interface close to the decoding center, probably blocks exit of the E-site tRNA. In Vibrio cholerae serotype O1 (strain ATCC 39315 / El Tor Inaba N16961), this protein is Small ribosomal subunit protein uS7.